The chain runs to 433 residues: Enolase (433 aa).

Gln163 serves as a coordination point for (2R)-2-phosphoglycerate. The Proton donor role is filled by Glu205. Positions 242, 285, and 312 each coordinate Mg(2+). (2R)-2-phosphoglycerate-binding residues include Lys337, Arg366, Ser367, and Lys388. Residue Lys337 is the Proton acceptor of the active site.

This sequence belongs to the enolase family. Mg(2+) is required as a cofactor.

Its subcellular location is the cytoplasm. The protein resides in the secreted. It is found in the cell surface. It carries out the reaction (2R)-2-phosphoglycerate = phosphoenolpyruvate + H2O. Its pathway is carbohydrate degradation; glycolysis; pyruvate from D-glyceraldehyde 3-phosphate: step 4/5. Its function is as follows. Catalyzes the reversible conversion of 2-phosphoglycerate (2-PG) into phosphoenolpyruvate (PEP). It is essential for the degradation of carbohydrates via glycolysis. This chain is Enolase, found in Lawsonia intracellularis (strain PHE/MN1-00).